The primary structure comprises 321 residues: Ribosomal RNA small subunit methyltransferase H (321 aa).

S-adenosyl-L-methionine-binding positions include 33–35 (AGH), Asp58, Phe85, Asp111, and Gln118.

This sequence belongs to the methyltransferase superfamily. RsmH family.

The protein localises to the cytoplasm. It carries out the reaction cytidine(1402) in 16S rRNA + S-adenosyl-L-methionine = N(4)-methylcytidine(1402) in 16S rRNA + S-adenosyl-L-homocysteine + H(+). Specifically methylates the N4 position of cytidine in position 1402 (C1402) of 16S rRNA. This is Ribosomal RNA small subunit methyltransferase H from Chloroherpeton thalassium (strain ATCC 35110 / GB-78).